A 175-amino-acid polypeptide reads, in one-letter code: UPF0398 protein SUB1405 (175 aa).

It belongs to the UPF0398 family.

The protein is UPF0398 protein SUB1405 of Streptococcus uberis (strain ATCC BAA-854 / 0140J).